We begin with the raw amino-acid sequence, 195 residues long: dTTP/UTP pyrophosphatase (195 aa).

Residue Asp-70 is the Proton acceptor of the active site.

This sequence belongs to the Maf family. YhdE subfamily. Requires a divalent metal cation as cofactor.

The protein resides in the cytoplasm. The catalysed reaction is dTTP + H2O = dTMP + diphosphate + H(+). It catalyses the reaction UTP + H2O = UMP + diphosphate + H(+). In terms of biological role, nucleoside triphosphate pyrophosphatase that hydrolyzes dTTP and UTP. May have a dual role in cell division arrest and in preventing the incorporation of modified nucleotides into cellular nucleic acids. This Photorhabdus laumondii subsp. laumondii (strain DSM 15139 / CIP 105565 / TT01) (Photorhabdus luminescens subsp. laumondii) protein is dTTP/UTP pyrophosphatase.